The sequence spans 318 residues: Small ribosomal subunit biogenesis GTPase RsgA (318 aa).

The region spanning 82–246 is the CP-type G domain; the sequence is RQDEIRTKSF…LIDSPGFQEF (165 aa). GTP is bound by residues 132-135 and 186-194; these read NKSD and GPSGAGKST. Residues Cys270, Cys275, His277, and Cys283 each coordinate Zn(2+).

It belongs to the TRAFAC class YlqF/YawG GTPase family. RsgA subfamily. In terms of assembly, monomer. Associates with 30S ribosomal subunit, binds 16S rRNA. It depends on Zn(2+) as a cofactor.

The protein localises to the cytoplasm. In terms of biological role, one of several proteins that assist in the late maturation steps of the functional core of the 30S ribosomal subunit. Helps release RbfA from mature subunits. May play a role in the assembly of ribosomal proteins into the subunit. Circularly permuted GTPase that catalyzes slow GTP hydrolysis, GTPase activity is stimulated by the 30S ribosomal subunit. The sequence is that of Small ribosomal subunit biogenesis GTPase RsgA from Variovorax paradoxus (strain S110).